A 256-amino-acid polypeptide reads, in one-letter code: MKKFLTAFLVAFTGLFLVACQNTKTENNASNEANTTLTLKVGTAPNYKPFNFKQDSKLTGFDTDLIEEIAKKNGIEIVWVETNFDGLIPALKSGKIDMIASAMSATDERRQSVDFTKPYYMSKNLYLKLKNNDSLQTKNDLEGKKIGVQLGTLQENTAKAIKNAQVQSNKDLNIAVLALKNNKIDAIVADQDTAKGFLAENPELVSFYQETDGGEGFSFAFDKNKQKDIIEIFNKGIDEAKTDGFYDTLIKKYELE.

The first 19 residues, 1-19 (MKKFLTAFLVAFTGLFLVA), serve as a signal peptide directing secretion. Cys-20 carries the N-palmitoyl cysteine lipid modification. Cys-20 is lipidated: S-diacylglycerol cysteine.

This sequence belongs to the bacterial solute-binding protein 3 family.

The protein localises to the cell membrane. Involved in histidine transport. This Campylobacter jejuni subsp. jejuni serotype O:2 (strain ATCC 700819 / NCTC 11168) protein is Probable histidine-binding protein (hisJ).